The sequence spans 541 residues: CRISPR-associated exonuclease Cas4/endonuclease Cas1 fusion (541 aa).

The CRISPR-associated exonuclease Cas4 stretch occupies residues 1-179; sequence MGIHSLLYCE…NCSLAPVCLP (179 aa). Position 9 (Cys9) interacts with [4Fe-4S] cluster. Mn(2+) is bound by residues Asp65 and Glu78. Positions 168, 171, and 177 each coordinate [4Fe-4S] cluster. The CRISPR-associated endonuclease Cas1 stretch occupies residues 204 to 541; that stretch reads TLHVFGHDSR…ANIFAQARLR (338 aa). Residues Glu365, His433, and Glu448 each contribute to the Mn(2+) site.

It in the N-terminal section; belongs to the CRISPR-associated exonuclease Cas4 family. In the C-terminal section; belongs to the CRISPR-associated endonuclease Cas1 family. As to quaternary structure, homodimer, forms a heterotetramer with a Cas2 homodimer. [4Fe-4S] cluster is required as a cofactor. It depends on Mg(2+) as a cofactor. The cofactor is Mn(2+).

The catalysed reaction is exonucleolytic cleavage in the 5'- to 3'-direction to yield nucleoside 3'-phosphates.. In terms of biological role, CRISPR (clustered regularly interspaced short palindromic repeat), is an adaptive immune system that provides protection against mobile genetic elements (viruses, transposable elements and conjugative plasmids). CRISPR clusters contain spacers, sequences complementary to antecedent mobile elements, and target invading nucleic acids. CRISPR clusters are transcribed and processed into CRISPR RNA (crRNA). The Cas4 region acts as a ssDNA exonuclease, while the Cas1 region acts as a dsDNA endonuclease. Involved in the integration of spacer DNA into the CRISPR cassette. The protein is CRISPR-associated exonuclease Cas4/endonuclease Cas1 fusion (cas4-cas1) of Leptospira interrogans serogroup Icterohaemorrhagiae serovar Lai (strain 56601).